Here is a 241-residue protein sequence, read N- to C-terminus: Uridylate kinase (241 aa).

ATP is bound at residue 14–17 (KLSG). Gly-56 contributes to the UMP binding site. Gly-57 and Arg-61 together coordinate ATP. UMP contacts are provided by residues Asp-77 and 138–145 (TGNPFFTT). ATP contacts are provided by Thr-165, Tyr-171, and Asp-174.

The protein belongs to the UMP kinase family. As to quaternary structure, homohexamer.

It localises to the cytoplasm. It catalyses the reaction UMP + ATP = UDP + ADP. Its pathway is pyrimidine metabolism; CTP biosynthesis via de novo pathway; UDP from UMP (UMPK route): step 1/1. Its activity is regulated as follows. Inhibited by UTP. Catalyzes the reversible phosphorylation of UMP to UDP. This Psychrobacter cryohalolentis (strain ATCC BAA-1226 / DSM 17306 / VKM B-2378 / K5) protein is Uridylate kinase.